We begin with the raw amino-acid sequence, 356 residues long: Tyrosine recombinase XerS (356 aa).

The Core-binding (CB) domain maps to 16-121 (IMPSYVLEYY…ALSSLYKYLT (106 aa)). Residues 169-354 (GFLDYIDNEY…INEEQKNALD (186 aa)) enclose the Tyr recombinase domain. Residues Arg-210, Lys-234, His-306, Arg-309, and His-332 contribute to the active site. Residue Tyr-341 is the O-(3'-phospho-DNA)-tyrosine intermediate of the active site.

This sequence belongs to the 'phage' integrase family. XerS subfamily.

It is found in the cytoplasm. FtsK is required for recombination. In terms of biological role, site-specific tyrosine recombinase, which acts by catalyzing the cutting and rejoining of the recombining DNA molecules. Essential to convert dimers of the bacterial chromosome into monomers to permit their segregation at cell division. The polypeptide is Tyrosine recombinase XerS (Lactococcus lactis subsp. lactis (strain IL1403) (Streptococcus lactis)).